The primary structure comprises 199 residues: Cytochrome c oxidase subunit 2 (199 aa).

The helical transmembrane segment at 1 to 13 (AICSLVLYLLSLM) threads the bilayer. Over 14-26 (LMEKLSSNTVDAQ) the chain is Mitochondrial matrix. The chain crosses the membrane as a helical span at residues 27-54 (EVELIWTILPAIVLILLALPSLQILYMM). Residues 55–199 (DEIDEPDLTL…SSLLSSSSSL (145 aa)) are Mitochondrial intermembrane-facing. Cu cation is bound by residues His128, Cys163, Glu165, Cys167, His171, and Met174. Glu165 is a Mg(2+) binding site.

The protein belongs to the cytochrome c oxidase subunit 2 family. Component of the cytochrome c oxidase (complex IV, CIV), a multisubunit enzyme composed of 14 subunits. The complex is composed of a catalytic core of 3 subunits MT-CO1, MT-CO2 and MT-CO3, encoded in the mitochondrial DNA, and 11 supernumerary subunits COX4I, COX5A, COX5B, COX6A, COX6B, COX6C, COX7A, COX7B, COX7C, COX8 and NDUFA4, which are encoded in the nuclear genome. The complex exists as a monomer or a dimer and forms supercomplexes (SCs) in the inner mitochondrial membrane with NADH-ubiquinone oxidoreductase (complex I, CI) and ubiquinol-cytochrome c oxidoreductase (cytochrome b-c1 complex, complex III, CIII), resulting in different assemblies (supercomplex SCI(1)III(2)IV(1) and megacomplex MCI(2)III(2)IV(2)). Found in a complex with TMEM177, COA6, COX18, COX20, SCO1 and SCO2. Interacts with TMEM177 in a COX20-dependent manner. Interacts with COX20. Interacts with COX16. Cu cation serves as cofactor.

It is found in the mitochondrion inner membrane. The catalysed reaction is 4 Fe(II)-[cytochrome c] + O2 + 8 H(+)(in) = 4 Fe(III)-[cytochrome c] + 2 H2O + 4 H(+)(out). In terms of biological role, component of the cytochrome c oxidase, the last enzyme in the mitochondrial electron transport chain which drives oxidative phosphorylation. The respiratory chain contains 3 multisubunit complexes succinate dehydrogenase (complex II, CII), ubiquinol-cytochrome c oxidoreductase (cytochrome b-c1 complex, complex III, CIII) and cytochrome c oxidase (complex IV, CIV), that cooperate to transfer electrons derived from NADH and succinate to molecular oxygen, creating an electrochemical gradient over the inner membrane that drives transmembrane transport and the ATP synthase. Cytochrome c oxidase is the component of the respiratory chain that catalyzes the reduction of oxygen to water. Electrons originating from reduced cytochrome c in the intermembrane space (IMS) are transferred via the dinuclear copper A center (CU(A)) of subunit 2 and heme A of subunit 1 to the active site in subunit 1, a binuclear center (BNC) formed by heme A3 and copper B (CU(B)). The BNC reduces molecular oxygen to 2 water molecules using 4 electrons from cytochrome c in the IMS and 4 protons from the mitochondrial matrix. This chain is Cytochrome c oxidase subunit 2 (MT-CO2), found in Rhea americana (Greater rhea).